The following is a 138-amino-acid chain: Ribulose bisphosphate carboxylase small subunit (138 aa).

Belongs to the RuBisCO small chain family. Heterohexadecamer of 8 large and 8 small subunits.

It is found in the plastid. It localises to the chloroplast. Its function is as follows. RuBisCO catalyzes two reactions: the carboxylation of D-ribulose 1,5-bisphosphate, the primary event in carbon dioxide fixation, as well as the oxidative fragmentation of the pentose substrate in the photorespiration process. Both reactions occur simultaneously and in competition at the same active site. Although the small subunit is not catalytic it is essential for maximal activity. The chain is Ribulose bisphosphate carboxylase small subunit from Pyropia suborbiculata (Red alga).